We begin with the raw amino-acid sequence, 796 residues long: Protein translocase subunit SecA 2 (796 aa).

Residues Gln-84, Gly-102–Thr-106, and Asp-496 each bind ATP.

Belongs to the SecA family. As to quaternary structure, monomer and homodimer. Part of the essential Sec protein translocation apparatus which comprises SecA, SecYEG and auxiliary proteins SecDF. Other proteins may also be involved.

Its subcellular location is the cell membrane. The protein localises to the cytoplasm. It carries out the reaction ATP + H2O + cellular proteinSide 1 = ADP + phosphate + cellular proteinSide 2.. In terms of biological role, part of the Sec protein translocase complex. Interacts with the SecYEG preprotein conducting channel. Has a central role in coupling the hydrolysis of ATP to the transfer of proteins into and across the cell membrane, serving as an ATP-driven molecular motor driving the stepwise translocation of polypeptide chains across the membrane. The polypeptide is Protein translocase subunit SecA 2 (Staphylococcus epidermidis (strain ATCC 35984 / DSM 28319 / BCRC 17069 / CCUG 31568 / BM 3577 / RP62A)).